The chain runs to 1368 residues: DNA-directed RNA polymerase subunit beta (1368 aa).

It belongs to the RNA polymerase beta chain family. The RNAP catalytic core consists of 2 alpha, 1 beta, 1 beta' and 1 omega subunit. When a sigma factor is associated with the core the holoenzyme is formed, which can initiate transcription.

It catalyses the reaction RNA(n) + a ribonucleoside 5'-triphosphate = RNA(n+1) + diphosphate. DNA-dependent RNA polymerase catalyzes the transcription of DNA into RNA using the four ribonucleoside triphosphates as substrates. In Syntrophotalea carbinolica (strain DSM 2380 / NBRC 103641 / GraBd1) (Pelobacter carbinolicus), this protein is DNA-directed RNA polymerase subunit beta.